An 890-amino-acid chain; its full sequence is Translation initiation factor IF-2 (890 aa).

The interval 45–304 (LIDHLNQKNS…LQQGFQKPAQ (260 aa)) is disordered. A compositionally biased stretch (polar residues) spans 67–81 (STLNIPGTGGKSKSV). Over residues 92-217 (VKRDPQEAER…RMAEENKWTD (126 aa)) the composition is skewed to basic and acidic residues. Residues 252-266 (GRGRNAKAARPKKGN) show a composition bias toward basic residues. Positions 267 to 280 (KHAESKADREEARA) are enriched in basic and acidic residues. The 170-residue stretch at 389–558 (PRAPVVTIMG…LLQAEVLELK (170 aa)) folds into the tr-type G domain. The G1 stretch occupies residues 398-405 (GHVDHGKT). 398–405 (GHVDHGKT) contributes to the GTP binding site. The tract at residues 423–427 (GITQH) is G2. The G3 stretch occupies residues 444 to 447 (DTPG). Residues 444 to 448 (DTPGH) and 498 to 501 (NKID) each bind GTP. Residues 498-501 (NKID) form a G4 region. The interval 534–536 (SAK) is G5. K808 is modified (N6-acetyllysine).

This sequence belongs to the TRAFAC class translation factor GTPase superfamily. Classic translation factor GTPase family. IF-2 subfamily.

Its subcellular location is the cytoplasm. In terms of biological role, one of the essential components for the initiation of protein synthesis. Protects formylmethionyl-tRNA from spontaneous hydrolysis and promotes its binding to the 30S ribosomal subunits. Also involved in the hydrolysis of GTP during the formation of the 70S ribosomal complex. In Escherichia coli (strain SMS-3-5 / SECEC), this protein is Translation initiation factor IF-2.